Consider the following 225-residue polypeptide: Cytidylate kinase (225 aa).

11-19 contacts ATP; that stretch reads GPAAAGKST.

The protein belongs to the cytidylate kinase family. Type 1 subfamily.

Its subcellular location is the cytoplasm. It carries out the reaction CMP + ATP = CDP + ADP. It catalyses the reaction dCMP + ATP = dCDP + ADP. The sequence is that of Cytidylate kinase from Bacillus cereus (strain G9842).